A 145-amino-acid polypeptide reads, in one-letter code: Synaptojanin-2-binding protein (145 aa).

Topologically, residues 1-117 are cytoplasmic; the sequence is MNGRVDYLVT…VHRGEGEPSG (117 aa). A PDZ domain is found at 13–100; the sequence is EINLTRGPSG…AVSLRVQHRL (88 aa). Residues 118-138 traverse the membrane as a helical; Anchor for type IV membrane protein segment; the sequence is VPVAMVLLPVFALTMVAVWAF. The Mitochondrial intermembrane segment spans residues 139–145; that stretch reads VRYRKQL.

In terms of assembly, binds (via the PDZ domain) to isoform 2A of SYNJ2 (via the unique motif in the C-terminus). Interacts (via C-terminus) with RALBP1. Interacts (via PDZ domain) with ACVR2A (via C-terminus) and ACVR2B (via C-terminus). Forms a ternary complex with ACVR2A and RALBP1. Interacts with MAPK12. Interacts with DLL1; enhances DLL1 protein stability, and promotes notch signaling in endothelial cells. In terms of tissue distribution, isoform 1 and isoform 2 are widely expressed, notably in brain, heart, lung, liver, kidney, skeletal muscle, ovary and testis. Isoform 3 is detected only in heart, spleen and testis.

Its subcellular location is the mitochondrion outer membrane. The protein resides in the cytoplasm. It localises to the perinuclear region. Functionally, isoform 1 regulates endocytosis of activin type 2 receptor kinases through the Ral/RALBP1-dependent pathway and may be involved in suppression of activin-induced signal transduction. Isoform 2 and isoform 3 show a stimulatory affect on activin-induced signal transduction and enhance activin type 2 expression at the cell surface. The sequence is that of Synaptojanin-2-binding protein from Mus musculus (Mouse).